We begin with the raw amino-acid sequence, 373 residues long: Ferroptosis suppressor protein 1 (373 aa).

The N-myristoyl glycine moiety is linked to residue Gly-2. The helical transmembrane segment at 7-27 threads the bilayer; sequence VESGALHVVIVGGGFGGIAAA. Residues 18-22, Arg-54, and Val-82 contribute to the 6-hydroxy-FAD site; that span reads GGGFG. Lys-168 is subject to N6-acetyllysine; by KAT2B. Position 285 (Asp-285) interacts with 6-hydroxy-FAD.

This sequence belongs to the FAD-dependent oxidoreductase family. In terms of assembly, interacts with importin subunits KPNA2 and IPO5; this interaction likely mediates the translocation into the nucleus upon oxidative stress. 6-hydroxy-FAD is required as a cofactor. Post-translationally, N-myristoylation at Gly-2 mediates the recruitment to lipid droplets and plasma membrane, enabling its anti-lipid peroxidation activity. In terms of processing, acetylation at Lys-168 prevents AIFM2 ubiquitination and degradation, thereby inhibiting ferroptosis. KAT2B mediates acetylation at Lys-168, while HDAC3 removes it. Ubiquitinated. AIFM2 undergoes 'Lys-29'-ubiquitination and proteasomal degradation, which is inhibited by acetylation at Lys-168. As to expression, detected in most normal tissues as two transcripts of 1.8 and 4.0 kb in length, respectively. Highly expressed in heart, moderately in liver and skeletal muscles, and expressed at low levels in placenta, lung, kidney, and pancreas. Both transcripts expressed following p53/TP53 induction. The shorter 1.8 kb transcript seems to be the major transcript in EB1 colon cancer cells.

It is found in the lipid droplet. It localises to the cell membrane. The protein localises to the cytoplasm. Its subcellular location is the mitochondrion membrane. The protein resides in the nucleus. It carries out the reaction ubiquinone-10 + NADH + H(+) = ubiquinol-10 + NAD(+). The enzyme catalyses phylloquinone + NADH + H(+) = phylloquinol + NAD(+). The catalysed reaction is menaquinone-4 + NADH + H(+) = menaquinol-4 + NAD(+). It catalyses the reaction menadione + NADH + H(+) = menadiol + NAD(+). The modification by 4-hydroxy-2-nonenal (HNE) adduction in mitochondria results in loss of the oxidoreductase activity and activation of a novel function in mitochondrial oxidative stress signaling. In terms of biological role, a NAD(P)H-dependent oxidoreductase that acts as a key inhibitor of ferroptosis. At the plasma membrane, catalyzes reduction of coenzyme Q/ubiquinone-10 to ubiquinol-10, a lipophilic radical-trapping antioxidant that prevents lipid oxidative damage and consequently ferroptosis. Acts in parallel to GPX4 to suppress phospholipid peroxidation and ferroptosis. This anti-ferroptotic function is independent of cellular glutathione levels. Also acts as a potent radical-trapping antioxidant by mediating warfarin-resistant vitamin K reduction in the canonical vitamin K cycle: catalyzes NAD(P)H-dependent reduction of vitamin K (phylloquinone, menaquinone-4 and menadione) to hydroquinone forms. Hydroquinones act as potent radical-trapping antioxidants inhibitor of phospholipid peroxidation and ferroptosis. May play a role in mitochondrial stress signaling. Upon oxidative stress, associates with the lipid peroxidation end product 4-hydroxy-2-nonenal (HNE) forming a lipid adduct devoid of oxidoreductase activity, which then translocates from mitochondria into the nucleus triggering DNA damage and cell death. Capable of DNA binding in a non-sequence specific way. The protein is Ferroptosis suppressor protein 1 of Homo sapiens (Human).